The sequence spans 938 residues: Isoleucine--tRNA ligase (938 aa).

A 'HIGH' region motif is present at residues 58–68 (PYANGNIHIGH). Residue Glu-562 participates in L-isoleucyl-5'-AMP binding. Positions 603-607 (KMSKS) match the 'KMSKS' region motif. Residue Lys-606 participates in ATP binding. Residues Cys-901, Cys-904, Cys-921, and Cys-924 each contribute to the Zn(2+) site.

The protein belongs to the class-I aminoacyl-tRNA synthetase family. IleS type 1 subfamily. As to quaternary structure, monomer. Zn(2+) serves as cofactor.

It localises to the cytoplasm. The catalysed reaction is tRNA(Ile) + L-isoleucine + ATP = L-isoleucyl-tRNA(Ile) + AMP + diphosphate. Functionally, catalyzes the attachment of isoleucine to tRNA(Ile). As IleRS can inadvertently accommodate and process structurally similar amino acids such as valine, to avoid such errors it has two additional distinct tRNA(Ile)-dependent editing activities. One activity is designated as 'pretransfer' editing and involves the hydrolysis of activated Val-AMP. The other activity is designated 'posttransfer' editing and involves deacylation of mischarged Val-tRNA(Ile). In Actinobacillus pleuropneumoniae serotype 7 (strain AP76), this protein is Isoleucine--tRNA ligase.